The primary structure comprises 104 residues: Photosystem II reaction center Psb28 protein (104 aa).

It belongs to the Psb28 family. As to quaternary structure, part of the photosystem II complex.

The protein resides in the cellular thylakoid membrane. The sequence is that of Photosystem II reaction center Psb28 protein from Synechococcus sp. (strain JA-3-3Ab) (Cyanobacteria bacterium Yellowstone A-Prime).